The sequence spans 313 residues: L-lactate dehydrogenase 1 (313 aa).

NAD(+)-binding residues include Val15, Asp36, Arg41, and Tyr66. Substrate-binding positions include Gln83, Arg89, and 121-124 (NPVD). NAD(+) is bound by residues 119–121 (ASN) and Ser144. 149 to 152 (DTAR) provides a ligand contact to substrate. Beta-D-fructose 1,6-bisphosphate is bound by residues Arg154 and His169. His176 acts as the Proton acceptor in catalysis. Position 218 is a phosphotyrosine (Tyr218). Substrate is bound at residue Thr227.

The protein belongs to the LDH/MDH superfamily. LDH family. Homotetramer.

It is found in the cytoplasm. The enzyme catalyses (S)-lactate + NAD(+) = pyruvate + NADH + H(+). Its pathway is fermentation; pyruvate fermentation to lactate; (S)-lactate from pyruvate: step 1/1. Its activity is regulated as follows. Allosterically activated by fructose 1,6-bisphosphate (FBP). Functionally, catalyzes the conversion of lactate to pyruvate. The polypeptide is L-lactate dehydrogenase 1 (Listeria monocytogenes serotype 4b (strain F2365)).